The following is an 803-amino-acid chain: Volume-regulated anion channel subunit LRRC8C (803 aa).

Over 1–22 (MIPVTEFRQFSEQQPAFRVLKP) the chain is Cytoplasmic. Residues 23–47 (WWDVFTDYLSVAMLMIGVFGCTLQV) form a helical membrane-spanning segment. The Extracellular portion of the chain corresponds to 48 to 124 (MQDKIICLPK…CYERALHWYA (77 aa)). Intrachain disulfides connect Cys54/Cys308 and Cys115/Cys293. N-linked (GlcNAc...) asparagine glycans are attached at residues Asn64 and Asn70. The helical transmembrane segment at 125 to 144 (KYFPYLVLIHTLVFMLCSNF) threads the bilayer. The Cytoplasmic portion of the chain corresponds to 145 to 262 (WFKFPGSSSK…EEGDILYAMY (118 aa)). The disordered stretch occupies residues 177–209 (EVSGEDSEEKDNRKNNMNRSNTIQSGPEDSLVN). Residues 191–209 (NNMNRSNTIQSGPEDSLVN) are compositionally biased toward polar residues. Phosphoserine occurs at positions 212 and 215. Residues 263–284 (VRQTVLKVIKFLIIIAYNSALV) traverse the membrane as a helical segment. The Extracellular portion of the chain corresponds to 285–314 (SKVQFTVDCNVDIQDMTGYKNFSCNHTMAH). Residues 315-339 (LFSKLSFCYLCFVSIYGLTCLYTLY) form a helical membrane-spanning segment. The Cytoplasmic portion of the chain corresponds to 340 to 803 (WLFYRSLREY…SDVREQMKTE (464 aa)). LRR repeat units lie at residues 397–420 (ENKL…KLQT), 421–443 (NAHN…VFEI), 446–466 (LQSL…IAQL), 467–488 (DNLQ…ALSF), 490–513 (KENL…MYGL), 515–537 (NLEE…TLES), 541–563 (LKSL…VVDV), 565–587 (SHLQ…NLKK), 588–611 (MTNL…VFSL), 613–635 (SLQE…SFQH), 636–659 (LRKL…IKKL), 660–682 (TSLE…LFLC), 684–705 (KIRY…IGVL), 706–728 (QSLQ…LYFC), 730–751 (KLKT…IGNL), 753–774 (FLSY…LGDC), and 776–799 (ALKR…VREQ).

The protein belongs to the LRRC8 family. Heterohexamer; oligomerizes with other LRRC8 proteins (LRRC8A, LRRC8B, LRRC8D and/or LRRC8E) to form a heterohexamer. Homoheptamer; inactive, likely because it is not targeted to the plasma membrane in the absence of LRRC8A. In vivo, the subunit composition may depend primarily on expression levels, and heterooligomeric channels containing various proportions of the different LRRC8 proteins may coexist. In terms of tissue distribution, expressed at highest levels in skeletal muscle, and at moderate levels in heart, lung and peripheral blood leukocytes.

It is found in the cell membrane. The protein localises to the endoplasmic reticulum membrane. It catalyses the reaction chloride(in) = chloride(out). It carries out the reaction iodide(out) = iodide(in). The enzyme catalyses taurine(out) = taurine(in). The catalysed reaction is 2',3'-cGAMP(out) = 2',3'-cGAMP(in). Functionally, non-essential component of the volume-regulated anion channel (VRAC, also named VSOAC channel), an anion channel required to maintain a constant cell volume in response to extracellular or intracellular osmotic changes. The VRAC channel conducts iodide better than chloride and can also conduct organic osmolytes like taurine. Plays a redundant role in the efflux of amino acids, such as aspartate and glutamate, in response to osmotic stress. The VRAC channel also mediates transport of immunoreactive cyclic dinucleotide GMP-AMP (2'-3'-cGAMP), an immune messenger produced in response to DNA virus in the cytosol. Channel activity requires LRRC8A plus at least one other family member (LRRC8B, LRRC8C, LRRC8D or LRRC8E); channel characteristics depend on the precise subunit composition. This Homo sapiens (Human) protein is Volume-regulated anion channel subunit LRRC8C.